The primary structure comprises 62 residues: Conotoxin TsMLCL-02 (62 aa).

A signal peptide spans 1–19 (MLCLPVFIILLLLASPAAP). Residues 20–54 (NPLERRIQSDLIRAALEDADMKTEKGILSSIMGTL) constitute a propeptide that is removed on maturation.

It belongs to the conotoxin T superfamily. As to expression, expressed by the venom duct.

The protein resides in the secreted. The polypeptide is Conotoxin TsMLCL-02 (Conus tessulatus (Tessellate cone)).